Consider the following 136-residue polypeptide: Large ribosomal subunit protein uL16 (136 aa).

Belongs to the universal ribosomal protein uL16 family. In terms of assembly, part of the 50S ribosomal subunit.

Its function is as follows. Binds 23S rRNA and is also seen to make contacts with the A and possibly P site tRNAs. The chain is Large ribosomal subunit protein uL16 from Shewanella pealeana (strain ATCC 700345 / ANG-SQ1).